The sequence spans 79 residues: Serine protease inhibitor Kazal-type 1 (79 aa).

Residues 1–23 (MKVASIFLLTALVLMSLSGNSGA) form the signal peptide. The 54-residue stretch at 26-79 (LGREAKCTNEVNGCPRIYNPVCGTDGVTYSNECLLCMENKERQTPVLIQKSGPC) folds into the Kazal-like domain. Intrachain disulfides connect C32/C61, C39/C58, and C47/C79.

It localises to the secreted. Its function is as follows. Serine protease inhibitor which exhibits anti-trypsin activity. In the pancreas, protects against trypsin-catalyzed premature activation of zymogens. In terms of biological role, in the male reproductive tract, binds to sperm heads where it modulates sperm capacitance by inhibiting calcium uptake and nitrogen oxide (NO) production. This Bos taurus (Bovine) protein is Serine protease inhibitor Kazal-type 1 (SPINK1).